The following is a 239-amino-acid chain: Carboxy-S-adenosyl-L-methionine synthase (239 aa).

Residues tyrosine 35, 64 to 66 (GCS), 88 to 89 (DN), and arginine 195 contribute to the S-adenosyl-L-methionine site.

It belongs to the class I-like SAM-binding methyltransferase superfamily. Cx-SAM synthase family. Homodimer.

The catalysed reaction is prephenate + S-adenosyl-L-methionine = carboxy-S-adenosyl-L-methionine + 3-phenylpyruvate + H2O. Its function is as follows. Catalyzes the conversion of S-adenosyl-L-methionine (SAM) to carboxy-S-adenosyl-L-methionine (Cx-SAM). This is Carboxy-S-adenosyl-L-methionine synthase from Helicobacter pylori (strain HPAG1).